Here is a 136-residue protein sequence, read N- to C-terminus: Large ribosomal subunit protein eL27A (136 aa).

This sequence belongs to the eukaryotic ribosomal protein eL27 family. In terms of assembly, component of the large ribosomal subunit (LSU). Mature yeast ribosomes consist of a small (40S) and a large (60S) subunit. The 40S small subunit contains 1 molecule of ribosomal RNA (18S rRNA) and at least 33 different proteins. The large 60S subunit contains 3 rRNA molecules (25S, 5.8S and 5S rRNA) and at least 46 different proteins.

Its subcellular location is the cytoplasm. It localises to the nucleus. Functionally, component of the ribosome, a large ribonucleoprotein complex responsible for the synthesis of proteins in the cell. The small ribosomal subunit (SSU) binds messenger RNAs (mRNAs) and translates the encoded message by selecting cognate aminoacyl-transfer RNA (tRNA) molecules. The large subunit (LSU) contains the ribosomal catalytic site termed the peptidyl transferase center (PTC), which catalyzes the formation of peptide bonds, thereby polymerizing the amino acids delivered by tRNAs into a polypeptide chain. The nascent polypeptides leave the ribosome through a tunnel in the LSU and interact with protein factors that function in enzymatic processing, targeting, and the membrane insertion of nascent chains at the exit of the ribosomal tunnel. In Schizosaccharomyces pombe (strain 972 / ATCC 24843) (Fission yeast), this protein is Large ribosomal subunit protein eL27A (rpl2701).